We begin with the raw amino-acid sequence, 543 residues long: Probable E3 ubiquitin-protein ligase ARI9 (543 aa).

A disordered region spans residues 1 to 26; sequence MDFSDDDMIDNKSGEENYSYGGGNES. The TRIAD supradomain stretch occupies residues 124–332; it reads VNIQCGICFE…RHSGACNRFV (209 aa). The Zn(2+) site is built by C128, C131, C145, H147, C150, C153, C173, C178, C217, C222, C240, C242, C247, C250, H255, C260, C287, and C290. The RING-type 1 zinc finger occupies 128–178; the sequence is CGICFESYTREEIARVSCGHPYCKTCWAGYITTKIEDGPGCLRVKCPEPSC. The segment at 197 to 260 adopts an IBR-type zinc-finger fold; sequence EKYSRYILRS…SEDAHSPVDC (64 aa). An RING-type 2; atypical zinc finger spans residues 287 to 317; the sequence is CPECKRPIEKNDGCNHMTCSAPCGHEFCWIC. C300 is an active-site residue. The Zn(2+) site is built by C305, C309, C314, C317, H324, and C328.

Belongs to the RBR family. Ariadne subfamily. Zn(2+) serves as cofactor.

The enzyme catalyses [E2 ubiquitin-conjugating enzyme]-S-ubiquitinyl-L-cysteine + [acceptor protein]-L-lysine = [E2 ubiquitin-conjugating enzyme]-L-cysteine + [acceptor protein]-N(6)-ubiquitinyl-L-lysine.. The protein operates within protein modification; protein ubiquitination. Its function is as follows. Might act as an E3 ubiquitin-protein ligase, or as part of E3 complex, which accepts ubiquitin from specific E2 ubiquitin-conjugating enzymes and then transfers it to substrates. This chain is Probable E3 ubiquitin-protein ligase ARI9 (ARI9), found in Arabidopsis thaliana (Mouse-ear cress).